The sequence spans 119 residues: uncharacterized protein (119 aa).

Positions 1 to 112 constitute an ABC transmembrane type-1 domain; the sequence is MVFNMRSTRG…FISSCLLLVL (112 aa). Transmembrane regions (helical) follow at residues 51-73 and 91-111; these read VLAW…ATRF and FEIA…LLLV.

Belongs to the binding-protein-dependent transport system permease family. CysTW subfamily.

It localises to the cell membrane. This is an uncharacterized protein from Haemophilus influenzae (strain ATCC 51907 / DSM 11121 / KW20 / Rd).